The following is a 101-amino-acid chain: Small ribosomal subunit protein bS18c (101 aa).

Belongs to the bacterial ribosomal protein bS18 family. As to quaternary structure, part of the 30S ribosomal subunit.

It is found in the plastid. It localises to the chloroplast. In Lepidium virginicum (Virginia pepperweed), this protein is Small ribosomal subunit protein bS18c.